We begin with the raw amino-acid sequence, 648 residues long: Solute carrier family 23 member 2 (648 aa).

The tract at residues 1–21 is disordered; the sequence is MMGIGKNTASKSVEAGGSTEG. The Cytoplasmic portion of the chain corresponds to 9-110; that stretch reads ASKSVEAGGS…LCIFLGLQHY (102 aa). Phosphoserine is present on Ser-70. Phosphothreonine is present on Thr-75. Ser-78 is subject to Phosphoserine. Thr-79 carries the phosphothreonine modification. Ser-81 is modified (phosphoserine). The chain crosses the membrane as a helical span at residues 111–131; that stretch reads LTCFSGTIAVPFLLADAMCVG. At 132-139 the chain is on the extracellular side; the sequence is DDQWATSQ. The chain crosses the membrane as a helical span at residues 140–160; that stretch reads LIGTIFFCVGITTLLQTTFGC. Position 161 (Arg-161) is a topological domain, cytoplasmic. The helical transmembrane segment at 162–182 threads the bilayer; the sequence is LPLFQASAFAFLAPARAILSL. Over 183–216 the chain is Extracellular; the sequence is DKWKCNTTEITVANGTAELLEHIWHPRIQEIQGA. N-linked (GlcNAc...) asparagine glycosylation is found at Asn-188 and Asn-196. Residues 217–237 form a helical membrane-spanning segment; sequence IIMSSLIEVVIGLLGLPGALL. The Cytoplasmic segment spans residues 238-264; that stretch reads RYIGPLTITPTVALIGLSGFQAAGERA. The helical transmembrane segment at 265–282 threads the bilayer; it reads GKHWGIAMLTIFLVLLFS. At 283-286 the chain is on the extracellular side; that stretch reads QYAR. Residues 287–300 constitute an intramembrane region (helical); it reads NVKFPLPIYKSKKG. At 301–307 the chain is on the extracellular side; that stretch reads WTAYKFQ. Residues 308-328 traverse the membrane as a helical segment; the sequence is LFKMFPIILAILVSWLLCFIF. Residues 329 to 369 are Cytoplasmic-facing; the sequence is TVTDVFPSNSTDYGYYARTDARKGVLLVAPWFKVPYPFQWG. The chain crosses the membrane as a helical span at residues 370 to 390; it reads MPTVSAAGVIGMLSAVVASII. Topologically, residues 391 to 415 are extracellular; it reads ESIGDYYACARLSCAPPPPIHAINR. Residues 416-436 traverse the membrane as a helical segment; the sequence is GIFVEGLSCVLDGIFGTGNGS. Residues 437–459 are Cytoplasmic-facing; it reads TSSSPNIGVLGITKVGSRRVIQY. A helical transmembrane segment spans residues 460 to 480; it reads GAALMLGLGMVGKFSALFASL. Residues 481 to 483 are Extracellular-facing; the sequence is PDP. Residues 484 to 504 form a helical membrane-spanning segment; the sequence is VLGALFCTLFGMITAVGLSNL. Residues 505–514 are Cytoplasmic-facing; it reads QFIDLNSSRN. Residues 515-535 traverse the membrane as a helical segment; it reads LFVLGFSIFFGLVLPSYLRQN. Over 536–545 the chain is Extracellular; the sequence is PLVTGITGID. The helical transmembrane segment at 546 to 566 threads the bilayer; that stretch reads QILNVLLTTAMFVGGCVAFIL. The Cytoplasmic portion of the chain corresponds to 567-648; it reads DNTIPGTPEE…SSDKDSQATV (82 aa). Thr-647 is modified (phosphothreonine).

It belongs to the nucleobase:cation symporter-2 (NCS2) (TC 2.A.40) family. Interacts with CLSTN3. Post-translationally, phosphorylated. Expressed in metabolically active and specialized tissues, including high expression in brain and adrenals. Detected in a wide range of tissues. Expression in kidney is almost undetectable.

The protein resides in the cell membrane. It catalyses the reaction L-ascorbate(out) + 2 Na(+)(out) = L-ascorbate(in) + 2 Na(+)(in). Sodium/ascorbate cotransporter. Mediates electrogenic uptake of vitamin C, with a stoichiometry of 2 Na(+) for each ascorbate. In Mus musculus (Mouse), this protein is Solute carrier family 23 member 2 (Slc23a2).